Reading from the N-terminus, the 216-residue chain is 3-keto-L-gulonate-6-phosphate decarboxylase UlaD (216 aa).

Asp-11 is a substrate binding site. The Mg(2+) site is built by Glu-33 and Asp-62. Arg-192 is a substrate binding site.

Belongs to the HPS/KGPDC family. KGPDC subfamily. In terms of assembly, homodimer. Mg(2+) is required as a cofactor.

It catalyses the reaction 3-dehydro-L-gulonate 6-phosphate + H(+) = L-xylulose 5-phosphate + CO2. It functions in the pathway cofactor degradation; L-ascorbate degradation; D-xylulose 5-phosphate from L-ascorbate: step 2/4. In terms of biological role, catalyzes the decarboxylation of 3-keto-L-gulonate-6-P into L-xylulose-5-P. Is involved in the anaerobic L-ascorbate utilization. This Salmonella typhi protein is 3-keto-L-gulonate-6-phosphate decarboxylase UlaD.